We begin with the raw amino-acid sequence, 184 residues long: NADH-quinone oxidoreductase subunit B (184 aa).

[4Fe-4S] cluster-binding residues include C63, C64, C128, and C158.

The protein belongs to the complex I 20 kDa subunit family. As to quaternary structure, NDH-1 is composed of 14 different subunits. Subunits NuoB, C, D, E, F, and G constitute the peripheral sector of the complex. It depends on [4Fe-4S] cluster as a cofactor.

The protein localises to the cell inner membrane. It catalyses the reaction a quinone + NADH + 5 H(+)(in) = a quinol + NAD(+) + 4 H(+)(out). Its function is as follows. NDH-1 shuttles electrons from NADH, via FMN and iron-sulfur (Fe-S) centers, to quinones in the respiratory chain. Couples the redox reaction to proton translocation (for every two electrons transferred, four hydrogen ions are translocated across the cytoplasmic membrane), and thus conserves the redox energy in a proton gradient. The polypeptide is NADH-quinone oxidoreductase subunit B (Xanthomonas campestris pv. campestris (strain 8004)).